Consider the following 439-residue polypeptide: Type 3 secretion system ATPase (439 aa).

172-177 (GGGKST) contacts ATP.

Belongs to the ATPase alpha/beta chains family. T3SS ATPase subfamily. The core secretion machinery of the T3SS is composed of approximately 20 different proteins, including cytoplasmic components, a base, an export apparatus and a needle. This subunit is part of the cytosolic complex. Forms homohexamers.

Its subcellular location is the cytoplasm. The enzyme catalyses ATP + H2O + cellular proteinSide 1 = ADP + phosphate + cellular proteinSide 2.. Its function is as follows. ATPase component of the type III secretion system (T3SS), also called injectisome, which is used to inject bacterial effector proteins into eukaryotic host cells. Acts as a molecular motor to provide the energy that is required for the export of proteins. Required for type III secretion apparatus (T3SA) formation, proper protein secretion, host cell invasion and virulence. May play a critical role in T3SS substrate recognition, disassembly of the effector/chaperone complex and unfolding of the effector in an ATP-dependent manner prior to secretion. The protein is Type 3 secretion system ATPase of Yersinia pseudotuberculosis serotype I (strain IP32953).